The primary structure comprises 300 residues: B1 kinase (300 aa).

The region spanning W16–F282 is the Protein kinase domain. Residues I22–I30 and K45 each bind ATP. N147 (proton acceptor) is an active-site residue.

This sequence belongs to the protein kinase superfamily. Ser/Thr protein kinase family. Poxviruses subfamily. As to quaternary structure, interacts with host JIP1; this interaction increases the amount of MAPK bound to JIP1 and subsequently increases the activity of transcription factors, such as JUN, that respond to these complexes. Interacts with protein OPG198; this interaction inhibits the repressive activity of OPG198 pseudokinase on viral replication factory formation. Mg(2+) serves as cofactor. Autophosphorylated.

It is found in the virion. The protein resides in the host cytoplasm. It carries out the reaction L-seryl-[protein] + ATP = O-phospho-L-seryl-[protein] + ADP + H(+). The catalysed reaction is L-threonyl-[protein] + ATP = O-phospho-L-threonyl-[protein] + ADP + H(+). Functionally, essential serine/threonine-protein kinase that plays different role in the viral life cycle. Phosphorylates the host small ribosomal protein RACK1 thereby customizing the ribosomes to a state optimal for viral mRNAs (which contain poly-A leaders) but not for host mRNAs. Facilitates viral DNA replication by inhibiting host BANF1, a cellular host defense responsive to foreign DNA. Phosphorylates host BANF1 on serine and threonine residues; this leads to BANF1 relocalization to the cytoplasm, loss of dimerization and impaired DNA binding activity. Indeed, BANF1 activity depends on its DNA-binding property which is blocked by VPK1-mediated phosphorylation. Required for viral intermediate genes expression, probably by inhibiting host BANF1. Modulates cellular responses via host JUN by two different mechanisms, either by direct phosphorylation or by modulation of upstream JIP1-MAPK complexes. Seems to participate in the accumulation/processing of late proteins and thus in virion maturation. In addition, inhibits B12 repressive activity on viral DNA replication via a phosphorylation-dependent mechanism. This is B1 kinase (OPG187) from Homo sapiens (Human).